The sequence spans 91 residues: Alpha-defensin 31 (91 aa).

The first 19 residues, 1–19, serve as a signal peptide directing secretion; that stretch reads MKKLVLLFALVLLAFQVQA. A propeptide spanning residues 20–65 is cleaved from the precursor; it reads DSIQNTDEETKTEEQQGEEDQAVSVSFGDPQGSGLQDAALGWGRRC. Positions 22–55 are disordered; the sequence is IQNTDEETKTEEQQGEEDQAVSVSFGDPQGSGLQ. 6 consecutive repeat copies span residues 65–67, 68–70, 71–73, 77–79, 80–82, and 83–85. The 6 X 3 AA tandem repeats of C-P-X stretch occupies residues 65–85; that stretch reads CPRCPPCPRCSWCPRCPTCPR.

This sequence belongs to the alpha-defensin family. Paneth cells of the small bowel.

It is found in the secreted. Apparent precursor of a secreted, cationic, proline- and cysteine-rich peptide that contains Cys-Pro-Xaa repeats. Unlike cryptdin, the proposed mature peptide region lacks the structural motif characteristic of defensins. It may have microbicidal activities. This chain is Alpha-defensin 31, found in Mus musculus (Mouse).